Consider the following 118-residue polypeptide: Large ribosomal subunit protein uL22 (118 aa).

Belongs to the universal ribosomal protein uL22 family. In terms of assembly, part of the 50S ribosomal subunit.

Functionally, this protein binds specifically to 23S rRNA; its binding is stimulated by other ribosomal proteins, e.g. L4, L17, and L20. It is important during the early stages of 50S assembly. It makes multiple contacts with different domains of the 23S rRNA in the assembled 50S subunit and ribosome. In terms of biological role, the globular domain of the protein is located near the polypeptide exit tunnel on the outside of the subunit, while an extended beta-hairpin is found that lines the wall of the exit tunnel in the center of the 70S ribosome. This chain is Large ribosomal subunit protein uL22, found in Prosthecochloris aestuarii (strain DSM 271 / SK 413).